Reading from the N-terminus, the 215-residue chain is LexA repressor (215 aa).

A DNA-binding region (H-T-H motif) is located at residues 28–48 (RAEIAAELGFSSPNAAEEHLR). Residues serine 133 and lysine 170 each act as for autocatalytic cleavage activity in the active site.

It belongs to the peptidase S24 family. As to quaternary structure, homodimer.

It catalyses the reaction Hydrolysis of Ala-|-Gly bond in repressor LexA.. Its function is as follows. Represses a number of genes involved in the response to DNA damage (SOS response), including recA and lexA. In the presence of single-stranded DNA, RecA interacts with LexA causing an autocatalytic cleavage which disrupts the DNA-binding part of LexA, leading to derepression of the SOS regulon and eventually DNA repair. The chain is LexA repressor from Burkholderia thailandensis (strain ATCC 700388 / DSM 13276 / CCUG 48851 / CIP 106301 / E264).